The chain runs to 696 residues: Glycosyltransferase GlyA (696 aa).

The tract at residues Met1–Glu301 is GT2 domain. The GT8 domain stretch occupies residues Lys302–His556. UDP contacts are provided by residues Ala308 to Tyr313 and Asp399 to Cys400. Residues Asp399, Asp401, and His518 each contribute to the Mn(2+) site. A UDP-binding site is contributed by His518–Lys524.

The protein in the N-terminal section; belongs to the glycosyltransferase 2 family. In the central section; belongs to the glycosyltransferase 8 family.

It participates in protein modification; protein glycosylation. In terms of biological role, involved in the polymorphic O-glycosylation of the serine-rich repeat protein PsrP. Catalyzes the fourth step in glycosylation of PsrP in this bacteria. Can transfer the sugar from UDP-galactose to the terminal sugar moiety of PsrP-GlcNAc-Glc-Gal or of PsrP-GlcNAc-Glc-Glc (using truncated substrates with the PsrP SSR1 domain). Has hydrolytic activity against UDP-galactose and to a lesser extent against UDP-glucose. This Streptococcus pneumoniae serotype 4 (strain ATCC BAA-334 / TIGR4) protein is Glycosyltransferase GlyA.